Consider the following 469-residue polypeptide: 3-isopropylmalate dehydratase large subunit 2 (469 aa).

[4Fe-4S] cluster-binding residues include cysteine 347, cysteine 408, and cysteine 411.

Belongs to the aconitase/IPM isomerase family. LeuC type 1 subfamily. As to quaternary structure, heterodimer of LeuC and LeuD. The cofactor is [4Fe-4S] cluster.

The catalysed reaction is (2R,3S)-3-isopropylmalate = (2S)-2-isopropylmalate. The protein operates within amino-acid biosynthesis; L-leucine biosynthesis; L-leucine from 3-methyl-2-oxobutanoate: step 2/4. Its function is as follows. Catalyzes the isomerization between 2-isopropylmalate and 3-isopropylmalate, via the formation of 2-isopropylmaleate. The protein is 3-isopropylmalate dehydratase large subunit 2 of Mannheimia succiniciproducens (strain KCTC 0769BP / MBEL55E).